Consider the following 57-residue polypeptide: Large ribosomal subunit protein bL32c (57 aa).

Belongs to the bacterial ribosomal protein bL32 family.

Its subcellular location is the plastid. The protein resides in the chloroplast. In Nandina domestica (Heavenly bamboo), this protein is Large ribosomal subunit protein bL32c.